A 111-amino-acid polypeptide reads, in one-letter code: Cytochrome c (111 aa).

The residue at position 1 (alanine 1) is an N-acetylalanine. Heme c is bound by residues cysteine 22, cysteine 25, and histidine 26. Lysine 80 is modified (N6,N6,N6-trimethyllysine). Methionine 88 lines the heme c pocket. Lysine 94 is subject to N6,N6,N6-trimethyllysine.

This sequence belongs to the cytochrome c family. Binds 1 heme c group covalently per subunit.

Its subcellular location is the mitochondrion intermembrane space. Functionally, electron carrier protein. The oxidized form of the cytochrome c heme group can accept an electron from the heme group of the cytochrome c1 subunit of cytochrome reductase. Cytochrome c then transfers this electron to the cytochrome oxidase complex, the final protein carrier in the mitochondrial electron-transport chain. In Guizotia abyssinica (Niger), this protein is Cytochrome c.